The following is an 81-amino-acid chain: ATP synthase subunit c, chloroplastic (81 aa).

A run of 2 helical transmembrane segments spans residues 7-27 (AASV…PGIG) and 57-77 (LAFM…LLFA).

The protein belongs to the ATPase C chain family. F-type ATPases have 2 components, F(1) - the catalytic core - and F(0) - the membrane proton channel. F(1) has five subunits: alpha(3), beta(3), gamma(1), delta(1), epsilon(1). F(0) has four main subunits: a(1), b(1), b'(1) and c(10-14). The alpha and beta chains form an alternating ring which encloses part of the gamma chain. F(1) is attached to F(0) by a central stalk formed by the gamma and epsilon chains, while a peripheral stalk is formed by the delta, b and b' chains.

It localises to the plastid. It is found in the chloroplast thylakoid membrane. In terms of biological role, f(1)F(0) ATP synthase produces ATP from ADP in the presence of a proton or sodium gradient. F-type ATPases consist of two structural domains, F(1) containing the extramembraneous catalytic core and F(0) containing the membrane proton channel, linked together by a central stalk and a peripheral stalk. During catalysis, ATP synthesis in the catalytic domain of F(1) is coupled via a rotary mechanism of the central stalk subunits to proton translocation. Key component of the F(0) channel; it plays a direct role in translocation across the membrane. A homomeric c-ring of between 10-14 subunits forms the central stalk rotor element with the F(1) delta and epsilon subunits. In Staurastrum punctulatum (Green alga), this protein is ATP synthase subunit c, chloroplastic.